We begin with the raw amino-acid sequence, 553 residues long: Probable cytochrome P450 301a1, mitochondrial (553 aa).

Cysteine 502 lines the heme pocket.

Belongs to the cytochrome P450 family. It depends on heme as a cofactor.

The protein localises to the mitochondrion membrane. The polypeptide is Probable cytochrome P450 301a1, mitochondrial (Cyp301a1) (Drosophila melanogaster (Fruit fly)).